Reading from the N-terminus, the 128-residue chain is L-ectoine synthase (128 aa).

It belongs to the ectoine synthase family.

It catalyses the reaction (2S)-4-acetamido-2-aminobutanoate = L-ectoine + H2O. It participates in amine and polyamine biosynthesis; ectoine biosynthesis; L-ectoine from L-aspartate 4-semialdehyde: step 3/3. In terms of biological role, catalyzes the circularization of gamma-N-acetyl-alpha,gamma-diaminobutyric acid (ADABA) to ectoine (1,4,5,6-tetrahydro-2-methyl-4-pyrimidine carboxylic acid), which is an excellent osmoprotectant. This is L-ectoine synthase from Aliivibrio fischeri (strain ATCC 700601 / ES114) (Vibrio fischeri).